The primary structure comprises 479 residues: 6-phosphogluconate dehydrogenase, decarboxylating (479 aa).

Residues glycine 9–glycine 14, asparagine 32–threonine 34, isoleucine 74–alanine 76, and asparagine 102 each bind NADP(+). Substrate-binding positions include asparagine 102 and serine 128–glycine 130. Lysine 182 acts as the Proton acceptor in catalysis. Histidine 185 to asparagine 186 contacts substrate. Glutamate 189 (proton donor) is an active-site residue. The substrate site is built by tyrosine 190, lysine 259, arginine 286, arginine 446, and histidine 452.

This sequence belongs to the 6-phosphogluconate dehydrogenase family. As to quaternary structure, homodimer.

The enzyme catalyses 6-phospho-D-gluconate + NADP(+) = D-ribulose 5-phosphate + CO2 + NADPH. It participates in carbohydrate degradation; pentose phosphate pathway; D-ribulose 5-phosphate from D-glucose 6-phosphate (oxidative stage): step 3/3. Catalyzes the oxidative decarboxylation of 6-phosphogluconate to ribulose 5-phosphate and CO(2), with concomitant reduction of NADP to NADPH. This is 6-phosphogluconate dehydrogenase, decarboxylating (gnd) from Chlamydia pneumoniae (Chlamydophila pneumoniae).